We begin with the raw amino-acid sequence, 484 residues long: Glutamate--tRNA ligase (484 aa).

The 'HIGH' region motif lies at Pro11–Asn21. Residues Lys255–Arg259 carry the 'KMSKS' region motif. Position 258 (Lys258) interacts with ATP.

It belongs to the class-I aminoacyl-tRNA synthetase family. Glutamate--tRNA ligase type 1 subfamily. In terms of assembly, monomer.

The protein localises to the cytoplasm. It catalyses the reaction tRNA(Glu) + L-glutamate + ATP = L-glutamyl-tRNA(Glu) + AMP + diphosphate. Its function is as follows. Catalyzes the attachment of glutamate to tRNA(Glu) in a two-step reaction: glutamate is first activated by ATP to form Glu-AMP and then transferred to the acceptor end of tRNA(Glu). The sequence is that of Glutamate--tRNA ligase from Streptococcus thermophilus (strain CNRZ 1066).